The following is a 151-amino-acid chain: MTGLERQLTEMLEAPVGALGYELVGLEFVRAGEHSTLRVFIDHENGIFVEDCAEASRQISAVMDVEDPITVAYNLEVSSPGLERPLFKAAHYQQFVGHEVSLVLKMPMNNRRKWKGDILEVNGEIVTVTVDGNNEEFALSNISKANLVPKF.

The protein belongs to the RimP family.

Its subcellular location is the cytoplasm. In terms of biological role, required for maturation of 30S ribosomal subunits. In Aliivibrio fischeri (strain MJ11) (Vibrio fischeri), this protein is Ribosome maturation factor RimP.